The primary structure comprises 443 residues: Ribosomal protein uS12 methylthiotransferase RimO (443 aa).

Positions 11-121 (PTVGFVSLGC…VMEAVHGALP (111 aa)) constitute an MTTase N-terminal domain. The [4Fe-4S] cluster site is built by Cys-20, Cys-56, Cys-85, Cys-152, Cys-156, and Cys-159. One can recognise a Radical SAM core domain in the interval 138–375 (LTPRHYAYLK…METQAEISAA (238 aa)). Positions 378–443 (DAKIGRTIEV…DAHDLWATPV (66 aa)) constitute a TRAM domain.

This sequence belongs to the methylthiotransferase family. RimO subfamily. The cofactor is [4Fe-4S] cluster.

The protein resides in the cytoplasm. It carries out the reaction L-aspartate(89)-[ribosomal protein uS12]-hydrogen + (sulfur carrier)-SH + AH2 + 2 S-adenosyl-L-methionine = 3-methylsulfanyl-L-aspartate(89)-[ribosomal protein uS12]-hydrogen + (sulfur carrier)-H + 5'-deoxyadenosine + L-methionine + A + S-adenosyl-L-homocysteine + 2 H(+). In terms of biological role, catalyzes the methylthiolation of an aspartic acid residue of ribosomal protein uS12. This is Ribosomal protein uS12 methylthiotransferase RimO from Thiobacillus denitrificans (strain ATCC 25259 / T1).